Consider the following 141-residue polypeptide: Large ribosomal subunit protein uL16 (141 aa).

Basic residues predominate over residues 1–21 (MLMPKRTKFRKQMKGRNRGKS). The interval 1-22 (MLMPKRTKFRKQMKGRNRGKSF) is disordered.

This sequence belongs to the universal ribosomal protein uL16 family. As to quaternary structure, part of the 50S ribosomal subunit.

Functionally, binds 23S rRNA and is also seen to make contacts with the A and possibly P site tRNAs. The polypeptide is Large ribosomal subunit protein uL16 (Wolinella succinogenes (strain ATCC 29543 / DSM 1740 / CCUG 13145 / JCM 31913 / LMG 7466 / NCTC 11488 / FDC 602W) (Vibrio succinogenes)).